Here is a 579-residue protein sequence, read N- to C-terminus: SHC-transforming protein 1 (579 aa).

An N-acetylmethionine modification is found at methionine 1. Positions 1 to 137 (MDLLPPKPKY…QLGGEEWTRH (137 aa)) are disordered. Positions 16 to 44 (ESLSSLEEGASGSTPPEELPSPSASSLGP) are enriched in low complexity. Residues serine 36 and serine 139 each carry the phosphoserine modification. Residue lysine 154 is modified to N6-acetyllysine. In terms of domain architecture, PID spans 156–339 (MGPGVSYLVR…AGFDGSAWDE (184 aa)). The disordered stretch occupies residues 337–357 (WDEEEEEPPDHQYYNDFPGKE). The CH1 stretch occupies residues 340-483 (EEEEPPDHQY…SMAEQLQGEP (144 aa)). Phosphotyrosine is present on residues tyrosine 349, tyrosine 350, and tyrosine 423. Residues 432–451 (ARQAGGGAGPPNPSLNGSAP) are disordered. Serine 449 is modified (phosphoserine). In terms of domain architecture, SH2 spans 484 to 575 (WFHGKLSRRE…GSELCLQQPV (92 aa)).

In terms of assembly, interacts with CPNE3; this interaction may mediate the binding of CPNE3 with ERBB2. Interacts with the NPXY motif of tyrosine-phosphorylated IGF1R and INSR in vitro via the PID domain. Once activated, binds to GRB2. Interacts with tyrosine-phosphorylated DDR2 and CD3T. Interacts with the N-terminal region of APS. Interacts with GRB7 and KIT. Interacts with PTK2/FAK1. Interacts with phosphorylated LRP1 and IRS4. Interacts with FLT4 (tyrosine-phosphorylated). Interacts with PDGFRB (tyrosine-phosphorylated). Interacts with ERBB4. Interacts with TEK/TIE2 (tyrosine-phosphorylated). Interacts with ALK, GAB2, TRIM31, INPP5D/SHIP1 and INPPL1/SHIP2. Interacts with PTPN6/SHP (tyrosine phosphorylated). Identified in a complex containing FGFR4, NCAM1, CDH2, PLCG1, FRS2, SRC, SHC1, GAP43 and CTTN. Interacts with EPHB1 and GRB2; activates the MAPK/ERK cascade to regulate cell migration. Interacts with the Trk receptors NTRK1, NTRK2 and NTRK3; in a phosphotyrosine-dependent manner. Interacts with CEACAM1; this interaction is CEACAM1-phosphorylation-dependent and mediates interaction with EGFR or INSR resulting in decrease coupling of SHC1 to the MAPK3/ERK1-MAPK1/ERK2 pathway. Interacts (via PID domain) with PEAK1 (when phosphorylated at 'Tyr-1177'). Found in a complex with PPP1CA, PPP1CC, SHC1 and PEAK1. In terms of processing, phosphorylated in response to FLT4 signaling. Tyrosine phosphorylated by ligand-activated PDGFRB. May be tyrosine phosphorylated by activated PTK2/FAK1. Tyrosine phosphorylated by TEK/TIE2. Tyrosine phosphorylated by activated PTK2B/PYK2. Dephosphorylation by PTPN2 may regulate interaction with GRB2. Phosphorylated by activated epidermal growth factor receptor. Phosphorylated in response to KIT signaling. Isoform p47Shc and isoform p52Shc are phosphorylated on tyrosine residues of the Pro-rich domain. Isoform p66Shc is phosphorylated on Ser-36 by PRKCB upon treatment with insulin, hydrogen peroxide or irradiation with ultraviolet light. FLT3 signaling promotes tyrosine phosphorylation of isoform p47Shc and isoform p52Shc. Also tyrosine phosphorylated by ligand-activated ALK. In terms of tissue distribution, widely expressed. Expressed in neural stem cells but absent in mature neurons.

The protein localises to the cytoplasm. It localises to the cell junction. The protein resides in the focal adhesion. It is found in the mitochondrion matrix. Its subcellular location is the mitochondrion. Signaling adapter that couples activated growth factor receptors to signaling pathways. Participates in signaling downstream of the angiopoietin receptor TEK/TIE2, and plays a role in the regulation of endothelial cell migration and sprouting angiogenesis. Participates in a signaling cascade initiated by activated KIT and KITLG/SCF. Isoform p47Shc and isoform p52Shc, once phosphorylated, couple activated receptor kinases to Ras via the recruitment of the GRB2/SOS complex and are implicated in the cytoplasmic propagation of mitogenic signals. Isoform p47Shc and isoform p52 may thus function as initiators of the Ras signaling cascade in various non-neuronal systems. Isoform p66Shc does not mediate Ras activation, but is involved in signal transduction pathways that regulate the cellular response to oxidative stress and life span. Isoform p66Shc acts as a downstream target of the tumor suppressor p53 and is indispensable for the ability of stress-activated p53 to induce elevation of intracellular oxidants, cytochrome c release and apoptosis. The expression of isoform p66Shc has been correlated with life span. This chain is SHC-transforming protein 1 (Shc1), found in Mus musculus (Mouse).